A 170-amino-acid polypeptide reads, in one-letter code: ATP synthase subunit b (170 aa).

A helical transmembrane segment spans residues 30 to 50 (FFFVLAIFLVVLAVIGTFVVP).

The protein belongs to the ATPase B chain family. As to quaternary structure, F-type ATPases have 2 components, F(1) - the catalytic core - and F(0) - the membrane proton channel. F(1) has five subunits: alpha(3), beta(3), gamma(1), delta(1), epsilon(1). F(0) has three main subunits: a(1), b(2) and c(10-14). The alpha and beta chains form an alternating ring which encloses part of the gamma chain. F(1) is attached to F(0) by a central stalk formed by the gamma and epsilon chains, while a peripheral stalk is formed by the delta and b chains.

The protein localises to the cell membrane. In terms of biological role, f(1)F(0) ATP synthase produces ATP from ADP in the presence of a proton or sodium gradient. F-type ATPases consist of two structural domains, F(1) containing the extramembraneous catalytic core and F(0) containing the membrane proton channel, linked together by a central stalk and a peripheral stalk. During catalysis, ATP synthesis in the catalytic domain of F(1) is coupled via a rotary mechanism of the central stalk subunits to proton translocation. Component of the F(0) channel, it forms part of the peripheral stalk, linking F(1) to F(0). The chain is ATP synthase subunit b from Mycobacterium marinum (strain ATCC BAA-535 / M).